The following is a 945-amino-acid chain: Isoleucine--tRNA ligase (945 aa).

A 'HIGH' region motif is present at residues 66-76 (PYANGDIHLGH). Glutamate 581 lines the L-isoleucyl-5'-AMP pocket. Positions 622–626 (KMSKS) match the 'KMSKS' region motif. Lysine 625 lines the ATP pocket. Cysteine 908, cysteine 911, cysteine 928, and cysteine 931 together coordinate Zn(2+).

This sequence belongs to the class-I aminoacyl-tRNA synthetase family. IleS type 1 subfamily. In terms of assembly, monomer. The cofactor is Zn(2+).

The protein localises to the cytoplasm. The enzyme catalyses tRNA(Ile) + L-isoleucine + ATP = L-isoleucyl-tRNA(Ile) + AMP + diphosphate. Its function is as follows. Catalyzes the attachment of isoleucine to tRNA(Ile). As IleRS can inadvertently accommodate and process structurally similar amino acids such as valine, to avoid such errors it has two additional distinct tRNA(Ile)-dependent editing activities. One activity is designated as 'pretransfer' editing and involves the hydrolysis of activated Val-AMP. The other activity is designated 'posttransfer' editing and involves deacylation of mischarged Val-tRNA(Ile). The chain is Isoleucine--tRNA ligase from Burkholderia ambifaria (strain MC40-6).